The chain runs to 348 residues: S-adenosylmethionine:tRNA ribosyltransferase-isomerase (348 aa).

This sequence belongs to the QueA family. In terms of assembly, monomer.

The protein resides in the cytoplasm. The enzyme catalyses 7-aminomethyl-7-carbaguanosine(34) in tRNA + S-adenosyl-L-methionine = epoxyqueuosine(34) in tRNA + adenine + L-methionine + 2 H(+). It participates in tRNA modification; tRNA-queuosine biosynthesis. In terms of biological role, transfers and isomerizes the ribose moiety from AdoMet to the 7-aminomethyl group of 7-deazaguanine (preQ1-tRNA) to give epoxyqueuosine (oQ-tRNA). The sequence is that of S-adenosylmethionine:tRNA ribosyltransferase-isomerase from Polynucleobacter necessarius subsp. necessarius (strain STIR1).